Here is a 416-residue protein sequence, read N- to C-terminus: Peptide chain release factor subunit 1 (416 aa).

The protein belongs to the eukaryotic release factor 1 family. As to quaternary structure, heterodimer of two subunits, one of which binds GTP.

It is found in the cytoplasm. Functionally, directs the termination of nascent peptide synthesis (translation) in response to the termination codons UAA, UAG and UGA. The sequence is that of Peptide chain release factor subunit 1 from Haloquadratum walsbyi (strain DSM 16790 / HBSQ001).